The following is a 385-amino-acid chain: Basigin (385 aa).

Residues 1–21 (MAAALFVLLGFALLGTHGASG) form the signal peptide. In terms of domain architecture, Ig-like spans 37–120 (GGSVELHCEA…SNDPDRNHLT (84 aa)). Cystine bridges form between Cys44–Cys108, Cys157–Cys203, and Cys242–Cys301. The 82-residue stretch at 138–219 (EPGTVFTTVE…MGTANIQLHG (82 aa)) folds into the Ig-like C2-type domain. Residues 138–323 (EPGTVFTTVE…ITLRVRSHLA (186 aa)) lie on the Extracellular side of the membrane. Asn160 carries N-linked (GlcNAc...) asparagine glycosylation. Positions 195–199 (DDQWG) are essential for interaction with KDR/VEGFR2. The Ig-like V-type domain maps to 221–315 (PRVKAVKSSE…SKGSDQAIIT (95 aa)). Residues Asn268 and Asn302 are each glycosylated (N-linked (GlcNAc...) asparagine). A helical membrane pass occupies residues 324–344 (ALWPFLGIVAEVLVLVTIIFI). The Cytoplasmic portion of the chain corresponds to 345–385 (YEKRRKPEDVLDDDDAGSAPLKSSGQHQNDKGKNVRQRNSS). A disordered region spans residues 353-385 (DVLDDDDAGSAPLKSSGQHQNDKGKNVRQRNSS). Residues Ser362 and Ser368 each carry the phosphoserine modification.

Homooligomer. Interacts with NXNL1. Interacts with SLC2A1 and SLC16A1/GLUT1. Interacts with XKR8; promoting its localization at the cell membrane. In terms of assembly, (Microbial infection) Interacts with P.falciparum (isolate 3D7) RH5/PfRH5; the interaction is required for the invasion of the host erythrocytes by the parasite at the merozoite stage. As to quaternary structure, homooligomer. Forms heterooligomers with isoform 3. Interacts with VEGFA and KDR/VEGFR2. Interacts with PPIA/CYPA. Interacts with PPIL2; regulates BSG transport to the cell membrane. Interacts with SLC16A1; interaction mediates SLC16A3 targeting to the plasma membrane. Interacts with SLC16A12. Interacts with SLC16A11. Interacts with AJAP1. Interacts with SLC1A3, ATP1B2, MAG and L1CAM. Interacts with SLC16A3; interaction mediates SLC16A3 targeting to the plasma membrane. (Microbial infection) Interacts with P.falciparum (isolates 3D7 or 7G8) RH5/PfRH5; the interaction is required for the invasion of the host erythrocytes by the parasite at the merozoite stage. In terms of assembly, (Microbial infection) Does not interact with severe acute respiratory syndrome coronavirus 2 (SARS-CoV-2) spike glycoprotein, even if previous works were based on a putative interaction. As to quaternary structure, forms heterooligomers with isoform 2. Interacts with SLC16A6; this interaction mediates targeting to the plasma membrane. N-glycosylated. As to expression, retina-specific. Expressed in retinal cone photoreceptors (at protein level). In terms of tissue distribution, expressed in erythrocytes (at protein level). Highly expressed in melanoma cell lines (at protein level). Highly expressed in the heart, kidney, skeletal muscle and testis. Highly expressed in the bone marrow, fetal liver, lung, testis and thymus.

It is found in the melanosome. The protein resides in the cell membrane. The protein localises to the photoreceptor inner segment. It localises to the cell projection. Its subcellular location is the cilium. It is found in the photoreceptor outer segment. The protein resides in the endosome. The protein localises to the endoplasmic reticulum membrane. It localises to the basolateral cell membrane. Functionally, essential for normal retinal maturation and development. Acts as a retinal cell surface receptor for NXNL1 and plays an important role in NXNL1-mediated survival of retinal cone photoreceptors. In association with glucose transporter SLC16A1/GLUT1 and NXNL1, promotes retinal cone survival by enhancing aerobic glycolysis and accelerating the entry of glucose into photoreceptors. May act as a potent stimulator of IL6 secretion in multiple cell lines that include monocytes. In terms of biological role, (Microbial infection) Erythrocyte receptor for P.falciparum RH5 which is essential for erythrocyte invasion by the merozoite stage of P.falciparum isolates 3D7 and Dd2. Its function is as follows. Signaling receptor for cyclophilins, essential for PPIA/CYPA and PPIB/CYPB-dependent signaling related to chemotaxis and adhesion of immune cells. Plays an important role in targeting monocarboxylate transporters SLC16A1/GLUT1, SLC16A11 and SLC16A12 to the plasma membrane. Acts as a coreceptor for vascular endothelial growth factor receptor 2 (KDR/VEGFR2) in endothelial cells enhancing its VEGFA-mediated activation and downstream signaling. Promotes angiogenesis through EPAS1/HIF2A-mediated up-regulation of VEGFA (isoform VEGF-165 and VEGF-121) and KDR/VEGFR2 in endothelial cells. Plays a key role in regulating tumor growth, invasion, metastasis and neoangiogenesis by stimulating the production and release of extracellular matrix metalloproteinases and KDR/VEGFR2 by both tumor cells and stromal cells (fibroblasts and endothelial cells). (Microbial infection) Erythrocyte receptor for P.falciparum RH5 which is essential for erythrocyte invasion by the merozoite stage of P.falciparum isolates 3D7, Dd2, 7G8 and HB3. Binding of P.falciparum RH5 results in BSG dimerization which triggers an increase in intracellular Ca(2+) in the erythrocyte. This essential step leads to a rearrangement of the erythrocyte cytoskeleton required for the merozoite invasion. Functionally, (Microbial infection) Can facilitate human SARS coronavirus (SARS-CoV-1) infection via its interaction with virus-associated PPIA/CYPA. In terms of biological role, (Microbial infection) Can facilitate HIV-1 infection via its interaction with virus-associated PPIA/CYPA. Its function is as follows. (Microbial infection) First described as a receptor for severe acute respiratory syndrome coronavirus 2 (SARS-CoV-2), it is not required for SARS-CoV-2 infection. (Microbial infection) Acts as a receptor for measles virus. Functionally, (Microbial infection) Promotes entry of pentamer-expressing human cytomegalovirus (HCMV) into epithelial and endothelial cells. This is Basigin from Homo sapiens (Human).